Reading from the N-terminus, the 136-residue chain is Cytidine deaminase (136 aa).

The region spanning M1 to E128 is the CMP/dCMP-type deaminase domain. N42–E44 lines the substrate pocket. C53 provides a ligand contact to Zn(2+). The active-site Proton donor is the E55. Zn(2+) contacts are provided by C86 and C89.

This sequence belongs to the cytidine and deoxycytidylate deaminase family. It depends on Zn(2+) as a cofactor.

The enzyme catalyses cytidine + H2O + H(+) = uridine + NH4(+). It carries out the reaction 2'-deoxycytidine + H2O + H(+) = 2'-deoxyuridine + NH4(+). Functionally, this enzyme scavenges exogenous and endogenous cytidine and 2'-deoxycytidine for UMP synthesis. The polypeptide is Cytidine deaminase (cdd) (Sporosarcina psychrophila (Bacillus psychrophilus)).